A 119-amino-acid polypeptide reads, in one-letter code: Large ribosomal subunit protein bL17 (119 aa).

It belongs to the bacterial ribosomal protein bL17 family. As to quaternary structure, part of the 50S ribosomal subunit. Contacts protein L32.

The protein is Large ribosomal subunit protein bL17 of Mycoplasma mycoides subsp. mycoides SC (strain CCUG 32753 / NCTC 10114 / PG1).